A 258-amino-acid polypeptide reads, in one-letter code: Indole-3-glycerol phosphate synthase (258 aa).

Belongs to the TrpC family.

It carries out the reaction 1-(2-carboxyphenylamino)-1-deoxy-D-ribulose 5-phosphate + H(+) = (1S,2R)-1-C-(indol-3-yl)glycerol 3-phosphate + CO2 + H2O. The protein operates within amino-acid biosynthesis; L-tryptophan biosynthesis; L-tryptophan from chorismate: step 4/5. This is Indole-3-glycerol phosphate synthase from Geobacillus kaustophilus (strain HTA426).